Here is an 863-residue protein sequence, read N- to C-terminus: Leucine--tRNA ligase (863 aa).

The 'HIGH' region motif lies at 41-51 (PYPSGRIHIGH). Residues 627 to 631 (KMSKS) carry the 'KMSKS' region motif. K630 serves as a coordination point for ATP.

Belongs to the class-I aminoacyl-tRNA synthetase family.

Its subcellular location is the cytoplasm. It carries out the reaction tRNA(Leu) + L-leucine + ATP = L-leucyl-tRNA(Leu) + AMP + diphosphate. The sequence is that of Leucine--tRNA ligase from Jannaschia sp. (strain CCS1).